We begin with the raw amino-acid sequence, 151 residues long: MFSTKALLLAGLISTALAGPWANICAGKSSNEIRTCDRHGCGQYSAQRSQRPHQGVDILCSAGSTVYAPFTGMIVGQEKPYQNKNAINNGVRISGRGFCVKMFYIKPIKYKGPIKKGEKLGTLLPLQKVYPGIQSHVHIENCDSSDPTAYL.

An N-terminal signal peptide occupies residues 1-18 (MFSTKALLLAGLISTALA). Cystine bridges form between Cys25/Cys60, Cys36/Cys41, and Cys99/Cys142. Zn(2+)-binding residues include His53, Asp57, and His138.

The protein belongs to the LECT2/MIM-1 family. In terms of assembly, interacts with MET. As to expression, highly expressed in adult and fetal liver and weakly in testis. Not expressed in bone marrow.

The protein resides in the cytoplasm. Its subcellular location is the secreted. Functionally, has a neutrophil chemotactic activity. Also a positive regulator of chondrocyte proliferation. Does not show metalloendopeptidase activity. The chain is Leukocyte cell-derived chemotaxin-2 (LECT2) from Homo sapiens (Human).